Here is a 233-residue protein sequence, read N- to C-terminus: Histone H1-I (233 aa).

Disordered regions lie at residues 1 to 55 (MSDS…HPPV) and 115 to 233 (TGAS…KKSK). Over residues 17–29 (KAATPAKSPAKSP) the composition is skewed to low complexity. In terms of domain architecture, H15 spans 51-125 (THPPVSEMVV…GASGSFKMPP (75 aa)). 2 stretches are compositionally biased toward basic and acidic residues: residues 128 to 137 (KKVDKPEAAP) and 144 to 155 (PKREIEKKEKKV). Composition is skewed to basic residues over residues 172–186 (AAKK…KKAA), 199–213 (SPKK…KPTP), and 223–233 (AAAKKPAKKSK).

This sequence belongs to the histone H1/H5 family.

The protein resides in the nucleus. It localises to the chromosome. Its function is as follows. Histones H1 are necessary for the condensation of nucleosome chains into higher-order structures. This chain is Histone H1-I, found in Glyptotendipes salinus (Midge).